The chain runs to 212 residues: Adenylate kinase (212 aa).

10–15 (GAGKGT) contacts ATP. The NMP stretch occupies residues 30-59 (STGDMFRAAMANQTEMGRLAKSYIDKGELV). AMP is bound by residues threonine 31, arginine 36, 57–59 (ELV), 86–89 (GYPR), and glutamine 93. Positions 127–159 (GRIINRKTGETFHKVFNPPVDYKEEDYYQREDD) are LID. Residues arginine 128 and 137–138 (TF) contribute to the ATP site. Positions 156 and 167 each coordinate AMP. Position 195 (glutamine 195) interacts with ATP.

The protein belongs to the adenylate kinase family. Monomer.

The protein resides in the cytoplasm. The catalysed reaction is AMP + ATP = 2 ADP. Its pathway is purine metabolism; AMP biosynthesis via salvage pathway; AMP from ADP: step 1/1. In terms of biological role, catalyzes the reversible transfer of the terminal phosphate group between ATP and AMP. Plays an important role in cellular energy homeostasis and in adenine nucleotide metabolism. The protein is Adenylate kinase of Streptococcus agalactiae serotype III (strain NEM316).